Reading from the N-terminus, the 615-residue chain is MFQVLKFCWKVLCFIRDLVMNVVFLGFVLLLVAIISFSSGGKKSTALTSEGALLLNLDGYLADNRDETLRWQDALSELNGEHVPRKISTFDVVFAIQQAEDDPKIKGLVLDLNYFEGADLPALDFIGGAISHFKDAGKPVIAYADNYSQGQYYLASFADEIYLNSIGSVDIHGLSQENLYFKEMLDKLAVTPHIFRVGTYKSAVEPFLRNDMSAEAKANMQRWLGEMWNNYVLSVSENRNIKKDRILPNAKQYLAELKALKGNSTAYAQQRGLVTDVVTRLDLDKKLSALFGKGSDGKANLIEFDDYLTQLPDRLEHYNVPNKIAVVNVEGTIIDGESDEENAGGDTIARILRKAHDDNSVKAVILRVNSPGGSAFASEIIRQETENLQKIGKPVIVSMGAMAASGGYWISSTADYIIADSNTITGSIGIFTMFPTFENSIKKIGVHADGVSTTELANTSAFSPLAKPVQDIYQTEIEHGYDRFLEIVSKGRQLSKTQVDKLAQGQVWLGSDAFQNGLVDEIGSFNEAVNKAEQLVNQRQDTAVQDFSVEWFTDDNVSLISTLLSDTKKGAQEQLVKWLGLPAPIQKLQKELNILTKFNDPKGQYLYCLNCGKVK.

At 1–17 (MFQVLKFCWKVLCFIRD) the chain is on the cytoplasmic side. The chain crosses the membrane as a helical span at residues 18-38 (LVMNVVFLGFVLLLVAIISFS). Residues 39–615 (SGGKKSTALT…LYCLNCGKVK (577 aa)) lie on the Periplasmic side of the membrane. Lys201 (proton donor/acceptor) is an active-site residue. The active-site Nucleophile is the Ser405.

Belongs to the peptidase S49 family. In terms of assembly, homotetramer.

It is found in the cell inner membrane. Functionally, digests cleaved signal peptides in vitro, its in vivo function is unknown. This activity is necessary to maintain proper secretion of mature proteins across the membrane. The sequence is that of Protease 4 (sppA) from Haemophilus influenzae (strain ATCC 51907 / DSM 11121 / KW20 / Rd).